The sequence spans 149 residues: MAEEKKEVQKTPEQKMDELNRQLRGYMANIEALRAEISVINQSITDLRTAEATLRSLKELGKGKEVLIPVGATAQIKAKSEGVDEVIMSIGTGISAVMSYDEAVDRIRKEIAALEALRRALEEAIADLYNKIEELLEEVRKVGQEEAKK.

Belongs to the prefoldin subunit alpha family.

It is found in the cytoplasm. Functionally, molecular chaperone capable of stabilizing a range of proteins. The chain is Putative prefoldin subunit alpha from Aquifex aeolicus (strain VF5).